The sequence spans 4351 residues: Protocadherin Fat 2 (4351 aa).

The N-terminal stretch at 1 to 18 (MTLVLLGVAMVLLHRAAC) is a signal peptide. Residues 19–4050 (EKPLEETITP…IKRGDWGQQE (4032 aa)) are Extracellular-facing. Cadherin domains lie at 34 to 148 (THSL…KPLF) and 149 to 256 (SPPS…PPVI). N-linked (GlcNAc...) asparagine glycosylation is found at N39, N210, N280, and N330. 31 Cadherin domains span residues 363-458 (EKAV…APVF), 459-564 (NRSS…QPMF), 565-669 (EEVN…VPVQ), 716-820 (DHFP…PPRF), 821-925 (PPGG…PPQC), 926-1032 (ITEH…SPHF), 1033-1142 (SSFV…RPVF), 1138-1242 (SRPV…SPMF), 1243-1346 (SHKL…SSIP), 1350-1448 (DESH…RPQF), 1449-1555 (LQDH…SPHF), 1556-1660 (TQPR…APIF), 1661-1758 (SKDE…APAF), 1759-1872 (LKST…PPRF), 1873-1968 (SEQI…SLQF), 1969-2070 (DQDI…IPEF), 2071-2171 (QHLP…NPLF), 2172-2272 (QSPY…PPTF), 2273-2379 (SQLV…PPEF), 2380-2481 (REPQ…SPEF), 2482-2585 (QQNV…APQF), 2586-2692 (KASG…LPKF), 2693-2799 (SEPL…RPVF), 2800-2908 (EADP…PPRF), 2909-3013 (ASED…SPQC), 3014-3115 (SQLL…APRF), 3116-3220 (FPSH…LPIF), 3221-3323 (LNSE…HPRF), 3324-3428 (THDL…PPRF), 3429-3533 (FQLN…PPST), and 3534-3631 (LPLE…APQQ). N-linked (GlcNAc...) asparagine glycans are attached at residues N459, N568, N627, and N789. A glycan (N-linked (GlcNAc...) asparagine) is linked at N996. N-linked (GlcNAc...) asparagine glycosylation is found at N1175, N1276, and N1417. 13 N-linked (GlcNAc...) asparagine glycosylation sites follow: N1899, N1998, N2007, N2102, N2165, N2183, N2325, N2368, N2387, N2430, N2470, N2547, and N2597. Residues N3127, N3278, and N3312 are each glycosylated (N-linked (GlcNAc...) asparagine). N3432, N3603, N3770, N3774, N3815, N3842, N3875, and N3906 each carry an N-linked (GlcNAc...) asparagine glycan. A Laminin G-like domain is found at 3775 to 3946 (GTTWRFSGQS…YLETWALSQC (172 aa)). 4 cysteine pairs are disulfide-bonded: C3914-C3946, C3953-C3964, C3958-C3974, and C3976-C3985. 2 consecutive EGF-like domains span residues 3949-3986 (PGTT…RNCE) and 3988-4024 (GREN…DRCE). N3991 is a glycosylation site (N-linked (GlcNAc...) asparagine). 3 cysteine pairs are disulfide-bonded: C3992-C4003, C3997-C4012, and C4014-C4023. A helical membrane pass occupies residues 4051–4071 (FLVIIVALPLLIIATVGLLLY). Residues 4072 to 4351 (CRRCKSHKPV…DYGSCEEVMF (280 aa)) are Cytoplasmic-facing. Residues 4313–4340 (DCEVNGGPAPGRSQPRAPPNYEGSDMVE) form a disordered region.

In terms of assembly, homodimer.

The protein resides in the cell membrane. It localises to the cell junction. Its subcellular location is the golgi apparatus. The protein localises to the trans-Golgi network. Functionally, involved in the regulation of cell migration. May be involved in mediating the organization of the parallel fibers of granule cells during cerebellar development. This chain is Protocadherin Fat 2 (Fat2), found in Mus musculus (Mouse).